The following is a 235-amino-acid chain: Replication protein (235 aa).

Y149 is a binding site for DNA.

This sequence belongs to the Gram-positive plasmids replication protein type 1 family.

Produces a single-strand nick in a specific site of the plasmid, and this nick results in single-strand replication by rolling circle mechanism. This Bacillus sp protein is Replication protein (repB).